A 311-amino-acid chain; its full sequence is Methionyl-tRNA formyltransferase (311 aa).

Residue 112–115 (SLLP) participates in (6S)-5,6,7,8-tetrahydrofolate binding.

It belongs to the Fmt family.

It catalyses the reaction L-methionyl-tRNA(fMet) + (6R)-10-formyltetrahydrofolate = N-formyl-L-methionyl-tRNA(fMet) + (6S)-5,6,7,8-tetrahydrofolate + H(+). Functionally, attaches a formyl group to the free amino group of methionyl-tRNA(fMet). The formyl group appears to play a dual role in the initiator identity of N-formylmethionyl-tRNA by promoting its recognition by IF2 and preventing the misappropriation of this tRNA by the elongation apparatus. This chain is Methionyl-tRNA formyltransferase, found in Rhizobium meliloti (strain 1021) (Ensifer meliloti).